The chain runs to 257 residues: MVKSHIGGWILLLFVATWSDVGLCKKRPKPGGWNTGGGSRYPGQGSPGGNRYPPQGGGGWGQPHGGGWGQPHGGGWGQPHGGGWGQPHGGGGWGQGGGSHGQWGKPNKPKTNMKHVAGAAAAGAVVGGLGGYMLGSAMSRPLIHFGNDYEDRYYRENMYRYPDQVYYRPVDQYSNQNNFVRDCVNITVKQHTVTTTTKGENFTETDMKIMERVVEQMCVTQYQKESEAYYQRGASAILFSPPPVILLISLLILLIVG.

Residues 1-24 (MVKSHIGGWILLLFVATWSDVGLC) form the signal peptide. Positions 25 to 234 (KKRPKPGGWN…ESEAYYQRGA (210 aa)) are interaction with GRB2, ERI3 and SYN1. Residues 28-110 (PKPGGWNTGG…GQWGKPNKPK (83 aa)) are disordered. Gly residues-rich tracts occupy residues 33–48 (WNTGGGSRYPGQGSPG) and 55–101 (QGGG…GSHG). Tandem repeats lie at residues 54–62 (PQGGGGWGQ), 63–70 (PHGGGWGQ), 71–78 (PHGGGWGQ), 79–86 (PHGGGWGQ), and 87–95 (PHGGGGWGQ). The interval 54 to 95 (PQGGGGWGQPHGGGWGQPHGGGWGQPHGGGWGQPHGGGGWGQ) is 5 X 8 AA tandem repeats of P-H-G-G-G-W-G-Q. The Cu(2+) site is built by H64, G65, G66, H72, G73, G74, H80, G81, G82, H88, G90, and G91. A disulfide bond links C183 and C218. 2 N-linked (GlcNAc...) asparagine glycosylation sites follow: N185 and N201. A234 carries the GPI-anchor amidated alanine lipid modification. The propeptide at 235–257 (SAILFSPPPVILLISLLILLIVG) is removed in mature form.

The protein belongs to the prion family. As to quaternary structure, monomer and homodimer. Has a tendency to aggregate into amyloid fibrils containing a cross-beta spine, formed by a steric zipper of superposed beta-strands. Soluble oligomers may represent an intermediate stage on the path to fibril formation. Copper binding may promote oligomerization. Interacts with GRB2, APP, ERI3/PRNPIP and SYN1. Mislocalized cytosolically exposed PrP interacts with MGRN1; this interaction alters MGRN1 subcellular location and causes lysosomal enlargement. Interacts with KIAA1191.

The protein localises to the cell membrane. The protein resides in the golgi apparatus. Functionally, its primary physiological function is unclear. Has cytoprotective activity against internal or environmental stresses. May play a role in neuronal development and synaptic plasticity. May be required for neuronal myelin sheath maintenance. May play a role in iron uptake and iron homeostasis. Soluble oligomers are toxic to cultured neuroblastoma cells and induce apoptosis (in vitro). Association with GPC1 (via its heparan sulfate chains) targets PRNP to lipid rafts. Also provides Cu(2+) or Zn(2+) for the ascorbate-mediated GPC1 deaminase degradation of its heparan sulfate side chains. The sequence is that of Major prion protein from Vulpes lagopus (Arctic fox).